The sequence spans 515 residues: UDP-glucosyltransferase 2 (515 aa).

The signal sequence occupies residues 1 to 20 (MEFRLLILALFSVLMSTSNG). Residues 21 to 471 (AEILALFPIH…TAGAFLHWYQ (451 aa)) are Lumenal-facing. 3 N-linked (GlcNAc...) asparagine glycosylation sites follow: asparagine 51, asparagine 236, and asparagine 303. The chain crosses the membrane as a helical span at residues 472 to 492 (YLLLDVITFLLVTFCAFCFIV). The Cytoplasmic segment spans residues 493–515 (KYICKALIHHYWSSSKSEKLKKN).

Belongs to the UDP-glycosyltransferase family. Post-translationally, glycosylated.

It is found in the endoplasmic reticulum membrane. It carries out the reaction kermesate + UDP-alpha-D-glucose = carminate + UDP + 2 H(+). The catalysed reaction is flavokermesate + UDP-alpha-D-glucose = flavokermesate 7-C-beta-D-glucoside + UDP + 2 H(+). Functionally, membrane-bound UDP-glucosyltransferase (UGT) which catalyzes the C-glucosylation of kermesate and flavokermesate to produce carminate and flavokermesate 7-C-beta-D-glucoside (dcll) respectively. Carminate is used as a deterrent against insect predators. This chain is UDP-glucosyltransferase 2, found in Dactylopius coccus (Cochineal).